Here is a 200-residue protein sequence, read N- to C-terminus: Recombination protein RecR (200 aa).

Residues 59–74 (CSVCGSLDTSDPCAIC) form a C4-type zinc finger. Positions 82 to 177 (RLLCVVEEVG…SVTMLARGVP (96 aa)) constitute a Toprim domain.

Belongs to the RecR family.

May play a role in DNA repair. It seems to be involved in an RecBC-independent recombinational process of DNA repair. It may act with RecF and RecO. The protein is Recombination protein RecR of Caulobacter sp. (strain K31).